A 255-amino-acid polypeptide reads, in one-letter code: Geranylgeranylglyceryl phosphate synthase (255 aa).

D31 and S60 together coordinate Mg(2+). Sn-glycerol 1-phosphate contacts are provided by residues 179–185 (YLEAGSG), 211–212 (GG), and 233–234 (GT).

This sequence belongs to the GGGP/HepGP synthase family. Group II subfamily. It depends on Mg(2+) as a cofactor.

It localises to the cytoplasm. It catalyses the reaction sn-glycerol 1-phosphate + (2E,6E,10E)-geranylgeranyl diphosphate = sn-3-O-(geranylgeranyl)glycerol 1-phosphate + diphosphate. Its pathway is membrane lipid metabolism; glycerophospholipid metabolism. In terms of biological role, prenyltransferase that catalyzes the transfer of the geranylgeranyl moiety of geranylgeranyl diphosphate (GGPP) to the C3 hydroxyl of sn-glycerol-1-phosphate (G1P). This reaction is the first ether-bond-formation step in the biosynthesis of archaeal membrane lipids. In Methanothrix thermoacetophila (strain DSM 6194 / JCM 14653 / NBRC 101360 / PT) (Methanosaeta thermophila), this protein is Geranylgeranylglyceryl phosphate synthase.